The following is an 896-amino-acid chain: MTEESEETVLYIEHRYVCSECNQLYGSLEEVLMHQNSHVPQQHFELVGVADPGVTVATDTASGTGLYQTLVQESQYQCLECGQLLMSPSQLLEHQELHLKMMAPQEAVPAEPSPKAPPLSSSTIHYECVDCKALFASQELWLNHRQTHLRATPTKAPAPVVLGSPVVLGPPVGQARVAVEHSYRKAEEGGEGATVPSAAATTTEVVTEVELLLYKCSECSQLFQLPADFLEHQATHFPAPVPESQEPALQQEVQASSPAEVPVSQPDPLPASDHSYELRNGEAIGRDRRGRRARRNNSGEAGGAATQELFCSACDQLFLSPHQLQQHLRSHREGVFKCPLCSRVFPSPSSLDQHLGDHSSESHFLCVDCGLAFGTEALLLAHRRAHTPNPLHSCPCGKTFVNLTKFLYHRRTHGVGGVPLPTTPVPPEEPVIGFPEPAPAETGEPEAPEPPVSEETSAGPAAPGTYRCLLCSREFGKALQLTRHQRFVHRLERRHKCSICGKMFKKKSHVRNHLRTHTGERPFPCPDCSKPFNSPANLARHRLTHTGERPYRCGDCGKAFTQSSTLRQHRLVHAQHFPYRCQECGVRFHRPYRLLMHRYHHTGEYPYKCRECPRSFLLRRLLEVHQLVVHAGRQPHRCPSCGAAFPSSLRLREHRCAAAAAQAPRRFECGTCGKKVGSAARLQAHEAAHAAAGPGEVLAKEPPAPRAPRATRAPVASPAALGSTATASPAAPARRRGLECSECKKLFSTETSLQVHRRIHTGERPYPCPDCGKAFRQSTHLKDHRRLHTGERPFACEVCGKAFAISMRLAEHRRIHTGERPYSCPDCGKSYRSFSNLWKHRKTHQQQHQAAVRQQLAEAEAAVGLAVMETAVEALPLVEAIEIYPLAEAEGVQISG.

C2H2-type zinc fingers lie at residues 16-38 (YVCS…QNSH) and 76-98 (YQCL…QELH). The residue at position 113 (S113) is a Phosphoserine. The C2H2-type 3 zinc finger occupies 126–148 (YECVDCKALFASQELWLNHRQTH). Phosphoserine is present on S164. The segment at 214–236 (YKCSECSQLFQLPADFLEHQATH) adopts a C2H2-type 4 zinc-finger fold. The disordered stretch occupies residues 239–301 (APVPESQEPA…RARRNNSGEA (63 aa)). Positions 247-257 (PALQQEVQASS) are enriched in polar residues. A compositionally biased stretch (basic and acidic residues) spans 274–287 (HSYELRNGEAIGRD). S298 bears the Phosphoserine mark. 4 C2H2-type zinc fingers span residues 309–331 (LFCS…LRSH), 336–358 (FKCP…LGDH), 364–386 (FLCV…RRAH), and 392–413 (HSCP…RRTH). The tract at residues 434 to 460 (FPEPAPAETGEPEAPEPPVSEETSAGP) is disordered. The C2H2-type 9 zinc-finger motif lies at 466-489 (YRCLLCSREFGKALQLTRHQRFVH). A C2H2-type 10; degenerate zinc finger spans residues 495-517 (HKCSICGKMFKKKSHVRNHLRTH). 4 consecutive C2H2-type zinc fingers follow at residues 523-545 (FPCP…RLTH), 551-573 (YRCG…RLVH), 579-601 (YRCQ…RYHH), and 607-630 (YKCR…LVVH). Residues 636 to 659 (HRCPSCGAAFPSSLRLREHRCAAA) form a C2H2-type 15; degenerate zinc finger. Residues 667 to 689 (FECGTCGKKVGSAARLQAHEAAH) form a C2H2-type 16 zinc finger. Residues 687-733 (AAHAAAGPGEVLAKEPPAPRAPRATRAPVASPAALGSTATASPAAPA) form a disordered region. A compositionally biased stretch (low complexity) spans 707–732 (APRATRAPVASPAALGSTATASPAAP). Residue S717 is modified to Phosphoserine. Phosphothreonine is present on T724. S728 carries the post-translational modification Phosphoserine. 4 C2H2-type zinc fingers span residues 738-760 (LECS…RRIH), 766-788 (YPCP…RRLH), 794-816 (FACE…RRIH), and 822-844 (YSCP…RKTH). The residue at position 832 (R832) is an Asymmetric dimethylarginine.

This sequence belongs to the krueppel C2H2-type zinc-finger protein family.

The protein resides in the nucleus. Its function is as follows. May be involved in transcriptional regulation. This chain is Zinc finger protein 574 (ZNF574), found in Homo sapiens (Human).